Consider the following 289-residue polypeptide: ATP synthase gamma chain (289 aa).

This sequence belongs to the ATPase gamma chain family. F-type ATPases have 2 components, CF(1) - the catalytic core - and CF(0) - the membrane proton channel. CF(1) has five subunits: alpha(3), beta(3), gamma(1), delta(1), epsilon(1). CF(0) has three main subunits: a, b and c.

The protein localises to the cell membrane. Its function is as follows. Produces ATP from ADP in the presence of a proton gradient across the membrane. The gamma chain is believed to be important in regulating ATPase activity and the flow of protons through the CF(0) complex. This is ATP synthase gamma chain from Mycoplasmopsis synoviae (strain 53) (Mycoplasma synoviae).